We begin with the raw amino-acid sequence, 146 residues long: Hemoglobin subunit beta (146 aa).

Position 1 is an N-acetylvaline (valine 1). One can recognise a Globin domain in the interval 2–146 (HLTPEEKVAV…VANALAHKYH (145 aa)). At threonine 12 the chain carries Phosphothreonine. Serine 44 is modified (phosphoserine). Lysine 59 carries the N6-acetyllysine modification. Histidine 63 provides a ligand contact to heme b. An N6-acetyllysine modification is found at lysine 82. Position 92 (histidine 92) interacts with heme b. Cysteine 93 bears the S-nitrosocysteine mark. N6-acetyllysine is present on lysine 144.

This sequence belongs to the globin family. As to quaternary structure, heterotetramer of two alpha chains and two beta chains. Red blood cells.

Its function is as follows. Involved in oxygen transport from the lung to the various peripheral tissues. This Cercocebus atys (Sooty mangabey) protein is Hemoglobin subunit beta (HBB).